A 32-amino-acid chain; its full sequence is Ferredoxin (32 aa).

One can recognise a 2Fe-2S ferredoxin-type domain in the interval 3–32; sequence YKVRLLSEAEGIDVTIDCADDVYILDAAEE.

Belongs to the 2Fe2S plant-type ferredoxin family. The cofactor is [2Fe-2S] cluster.

It is found in the plastid. It localises to the chloroplast. Functionally, ferredoxins are iron-sulfur proteins that transfer electrons in a wide variety of metabolic reactions. The protein is Ferredoxin of Porphyridium purpureum (Red alga).